We begin with the raw amino-acid sequence, 116 residues long: Large ribosomal subunit protein bL17 (116 aa).

It belongs to the bacterial ribosomal protein bL17 family. As to quaternary structure, part of the 50S ribosomal subunit. Contacts protein L32.

The sequence is that of Large ribosomal subunit protein bL17 from Helicobacter pylori (strain J99 / ATCC 700824) (Campylobacter pylori J99).